A 512-amino-acid chain; its full sequence is Polyamine aminopropyltransferase (512 aa).

The next 7 helical transmembrane spans lie at Ile-19–Leu-39, Leu-48–Met-68, Val-76–Ile-96, Tyr-108–Ile-128, Ala-151–Val-171, Lys-172–Phe-192, and Phe-199–Phe-219. One can recognise a PABS domain in the interval Ala-215–Arg-450. A spermidine synthase region spans residues Leu-217–Ile-457. Gln-245 is a binding site for S-methyl-5'-thioadenosine. Spermidine contacts are provided by His-275 and Asp-299. S-methyl-5'-thioadenosine is bound by residues Asp-319 and Asp-353–Ala-354. Asp-371 acts as the Proton acceptor in catalysis.

It belongs to the spermidine/spermine synthase family. In terms of assembly, homodimer or homotetramer.

The protein resides in the cell membrane. It catalyses the reaction S-adenosyl 3-(methylsulfanyl)propylamine + putrescine = S-methyl-5'-thioadenosine + spermidine + H(+). It functions in the pathway amine and polyamine biosynthesis; spermidine biosynthesis; spermidine from putrescine: step 1/1. In terms of biological role, catalyzes the irreversible transfer of a propylamine group from the amino donor S-adenosylmethioninamine (decarboxy-AdoMet) to putrescine (1,4-diaminobutane) to yield spermidine. This is Polyamine aminopropyltransferase from Oceanobacillus iheyensis (strain DSM 14371 / CIP 107618 / JCM 11309 / KCTC 3954 / HTE831).